A 200-amino-acid polypeptide reads, in one-letter code: Thymidine kinase (200 aa).

Residues 9-16 and 88-91 each bind ATP; these read STMNAGKS and DEAH. The active-site Proton acceptor is E89. C146, C148, C183, and H186 together coordinate Zn(2+).

The protein belongs to the thymidine kinase family. In terms of assembly, homotetramer.

The protein localises to the cytoplasm. It carries out the reaction thymidine + ATP = dTMP + ADP + H(+). This Rhizobium etli (strain ATCC 51251 / DSM 11541 / JCM 21823 / NBRC 15573 / CFN 42) protein is Thymidine kinase.